Here is a 56-residue protein sequence, read N- to C-terminus: Large ribosomal subunit protein bL33c (56 aa).

Belongs to the bacterial ribosomal protein bL33 family.

It is found in the plastid. The protein localises to the chloroplast. This chain is Large ribosomal subunit protein bL33c, found in Rhodomonas salina (Cryptomonas salina).